The chain runs to 207 residues: Large ribosomal subunit protein uL3 (207 aa).

The tract at residues 119–143 is disordered; it reads GFQGSIKRNGQHRGPMAHGSRYHRR.

Belongs to the universal ribosomal protein uL3 family. Part of the 50S ribosomal subunit. Forms a cluster with proteins L14 and L19.

In terms of biological role, one of the primary rRNA binding proteins, it binds directly near the 3'-end of the 23S rRNA, where it nucleates assembly of the 50S subunit. This Ligilactobacillus salivarius (strain UCC118) (Lactobacillus salivarius) protein is Large ribosomal subunit protein uL3.